A 364-amino-acid polypeptide reads, in one-letter code: Probable G-protein coupled receptor AH9.4 (364 aa).

Position 1 (Met1) is a topological domain, extracellular. The chain crosses the membrane as a helical span at residues 2 to 22 (AFLQSAYLVMVFTVPIAGVIL). Residues 23–48 (NTYVLRKLIRVARKSVVRFETTSGLP) are Cytoplasmic-facing. The chain crosses the membrane as a helical span at residues 49–69 (LAAMSVGDSITLCALLMQAIF). Topologically, residues 70 to 89 (HITPKGEVPTVVLSSICKFG) are extracellular. Residues 90–110 (IFLIHSTSAFSVWCWFFLSVL) traverse the membrane as a helical segment. At 111–130 (RYIAVFHPFKYRTIWRQPRN) the chain is on the cytoplasmic side. The chain crosses the membrane as a helical span at residues 131 to 151 (ALKFLAGAVGMFQIYTLIFVT). Residues 152–177 (YRQEEKSCGEYDVFHESAFKHVHLLD) are Extracellular-facing. The chain crosses the membrane as a helical span at residues 178 to 198 (IFLFYAIPSLLRITLDFLVLI). Topologically, residues 199–277 (HCYSPFSVEG…KKKTAMVMRS (79 aa)) are cytoplasmic. A helical membrane pass occupies residues 278–298 (ILISVLNLLLNLPSHIFRAWA). The Extracellular segment spans residues 299-315 (SYDESSLENEIVRTLEP). The chain crosses the membrane as a helical span at residues 316-336 (IAQMMYFSQFACNAFYLATSI). Over 337–364 (YETNGSPRNTVISSSNRHVSRCISDDEA) the chain is Cytoplasmic.

It belongs to the G-protein coupled receptor 1 family.

It localises to the cell membrane. Functionally, not known. Putative receptor. This Caenorhabditis elegans protein is Probable G-protein coupled receptor AH9.4.